The primary structure comprises 208 residues: Large ribosomal subunit protein uL3 (208 aa).

Positions 117–147 (FQGVIKRHGQSRGPMAHGSRYHRRPGSMGPV) are disordered.

This sequence belongs to the universal ribosomal protein uL3 family. Part of the 50S ribosomal subunit. Forms a cluster with proteins L14 and L19.

Functionally, one of the primary rRNA binding proteins, it binds directly near the 3'-end of the 23S rRNA, where it nucleates assembly of the 50S subunit. This is Large ribosomal subunit protein uL3 from Streptococcus equi subsp. zooepidemicus (strain H70).